The primary structure comprises 962 residues: UBP9-binding protein bun107 (962 aa).

WD repeat units follow at residues 25-69, 77-116, 121-162, 172-211, 214-253, and 302-339; these read DANC…GKAS, AHSA…ASCL, EHTD…EVMR, VVGP…RITD, GHTD…CLFS, and KQDA…NQDV. Low complexity predominate over residues 568 to 578; the sequence is SPLRIRSRPSP. Disordered regions lie at residues 568 to 615 and 702 to 758; these read SPLR…QIPS and RAAS…PREL. Residues 707–723 show a composition bias toward polar residues; that stretch reads RVFSTGTSVTSPQALSK. Serine 717 bears the Phosphoserine mark. Low complexity predominate over residues 724-738; it reads TNNTVNNAANTENNT.

Interacts with ubp9 and bun62.

It localises to the cytoplasm. The protein resides in the cell tip. Functionally, required for the ubp9 recruitment to septa and cell tips but also for its enzymatic activity at these specific locations. The protein is UBP9-binding protein bun107 (bun107) of Schizosaccharomyces pombe (strain 972 / ATCC 24843) (Fission yeast).